Consider the following 556-residue polypeptide: Formate--tetrahydrofolate ligase (556 aa).

Thr65 to Ser72 is an ATP binding site.

This sequence belongs to the formate--tetrahydrofolate ligase family.

It carries out the reaction (6S)-5,6,7,8-tetrahydrofolate + formate + ATP = (6R)-10-formyltetrahydrofolate + ADP + phosphate. It functions in the pathway one-carbon metabolism; tetrahydrofolate interconversion. This Clostridium perfringens (strain 13 / Type A) protein is Formate--tetrahydrofolate ligase.